A 900-amino-acid polypeptide reads, in one-letter code: MESCYNPGLDGIIEYDDFKLNSSIVEPKEPAPETADGPYLVIVEQPKQRGFRFRYGCEGPSHGGLPGASSEKGRKTYPTVKICNYEGPAKIEVDLVTHSDPPRAHAHSLVGKQCSELGICAVSVGPKDMTAQFNNLGVLHVTKKNMMGTMIQKLQRQRLRSRPQGLTEAEQRELEQEAKELKKVMDLSIVRLRFSAFLRASDGSFSLPLKPVISQPIHDSKSPGASNLKISRMDKTAGSVRGGDEVYLLCDKVQKDDIEVRFYEDDENGWQAFGDFSPTDVHKQYAIVFRTPPYHKMKIERPVTVFLQLKRKRGGDVSDSKQFTYYPLVEDKEEVQRKRRKALPTFSQPFGGGSHMGGGSGGAAGGYGGAGGGGSLGFFPSSLAYSPYQSGAGPMGCYPGGGGGAQMAATVPSRDSGEEAAEPSAPSRTPQCEPQAPEMLQRAREYNARLFGLAQRSARALLDYGVTADARALLAGQRHLLTAQDENGDTPLHLAIIHGQTSVIEQIVYVIHHAQDLGVVNLTNHLHQTPLHLAVITGQTSVVSFLLRVGADPALLDRHGDSAMHLALRAGAGAPELLRALLQSGAPAVPQLLHMPDFEGLYPVHLAVRARSPECLDLLVDSGAEVEATERQGGRTALHLATEMEELGLVTHLVTKLRANVNARTFAGNTPLHLAAGLGYPTLTRLLLKAGADIHAENEEPLCPLPSPPTSDSDSDSEGPEKDTRSSFRGHTPLDLTCSTKVKTLLLNAAQNTMEPPLTPPSPAGPGLSLGDTALQNLEQLLDGPEAQGSWAELAERLGLRSLVDTYRQTTSPSGSLLRSYELAGGDLAGLLEALSDMGLEEGVRLLRGPETRDKLPSTAEVKEDSAYGSQSVEQEAEKLGPPPEPPGGLCHGHPQPQVH.

Phosphoserine occurs at positions 23 and 161. Positions 38–343 (PYLVIVEQPK…EVQRKRRKAL (306 aa)) constitute an RHD domain. A Nuclear localization signal motif is present at residues 337-341 (RKRRK). Residues 346-377 (FSQPFGGGSHMGGGSGGAAGGYGGAGGGGSLG) are GRR. A disordered region spans residues 404 to 435 (GAQMAATVPSRDSGEEAAEPSAPSRTPQCEPQ). Threonine 429 is modified (phosphothreonine). ANK repeat units follow at residues 487-519 (NGDT…DLGV), 526-555 (LHQT…DPAL), 559-591 (HGDS…AVPQ), 599-628 (EGLY…EVEA), 633-663 (GGRT…NVNA), and 667-696 (AGNT…DIHA). The tract at residues 698–734 (NEEPLCPLPSPPTSDSDSDSEGPEKDTRSSFRGHTPL) is disordered. Residues serine 713, serine 715, and serine 717 each carry the phosphoserine modification. An ANK 7 repeat occupies 729–758 (RGHTPLDLTCSTKVKTLLLNAAQNTMEPPL). The 88-residue stretch at 764–851 (AGPGLSLGDT…EGVRLLRGPE (88 aa)) folds into the Death domain. A Phosphoserine modification is found at serine 812. Positions 849–866 (GPETRDKLPSTAEVKEDS) are enriched in basic and acidic residues. A disordered region spans residues 849–900 (GPETRDKLPSTAEVKEDSAYGSQSVEQEAEKLGPPPEPPGGLCHGHPQPQVH). Residue lysine 855 forms a Glycyl lysine isopeptide (Lys-Gly) (interchain with G-Cter in ubiquitin) linkage. A phosphoserine; by MAP3K14 mark is found at serine 866 and serine 870. Low complexity predominate over residues 888 to 900 (GGLCHGHPQPQVH).

Component of the NF-kappa-B RelB-p52 complex. Homodimer; component of the NF-kappa-B p52-p52 complex. Component of the NF-kappa-B p65-p52 complex. Component of the NF-kappa-B p52-c-Rel complex. NFKB2/p52 interacts with NFKBIE. Component of a complex consisting of the NF-kappa-B p50-p50 homodimer and BCL3. Directly interacts with MEN1. While translation occurs, the particular unfolded structure after the GRR repeat promotes the generation of p52 making it an acceptable substrate for the proteasome. This process is known as cotranslational processing. The processed form is active and the unprocessed form acts as an inhibitor (I kappa B-like), being able to form cytosolic complexes with NF-kappa B, trapping it in the cytoplasm. Complete folding of the region downstream of the GRR repeat precludes processing. Post-translationally, subsequent to MAP3K14-dependent serine phosphorylation, p100 polyubiquitination occurs then triggering its proteasome-dependent processing. In terms of processing, constitutive processing is tightly suppressed by its C-terminal processing inhibitory domain, named PID, which contains the death domain. Ubiquitinated by TRIM55; leading to processing by VCP and subsequent ubiquitin-dependent protein degradation by the proteasome.

Its subcellular location is the nucleus. It localises to the cytoplasm. Its function is as follows. NF-kappa-B is a pleiotropic transcription factor present in almost all cell types and is the endpoint of a series of signal transduction events that are initiated by a vast array of stimuli related to many biological processes such as inflammation, immunity, differentiation, cell growth, tumorigenesis and apoptosis. NF-kappa-B is a homo- or heterodimeric complex formed by the Rel-like domain-containing proteins RELA/p65, RELB, NFKB1/p105, NFKB1/p50, REL and NFKB2/p52. The dimers bind at kappa-B sites in the DNA of their target genes and the individual dimers have distinct preferences for different kappa-B sites that they can bind with distinguishable affinity and specificity. Different dimer combinations act as transcriptional activators or repressors, respectively. NF-kappa-B is controlled by various mechanisms of post-translational modification and subcellular compartmentalization as well as by interactions with other cofactors or corepressors. NF-kappa-B complexes are held in the cytoplasm in an inactive state complexed with members of the NF-kappa-B inhibitor (I-kappa-B) family. In a conventional activation pathway, I-kappa-B is phosphorylated by I-kappa-B kinases (IKKs) in response to different activators, subsequently degraded thus liberating the active NF-kappa-B complex which translocates to the nucleus. In a non-canonical activation pathway, the MAP3K14-activated CHUK/IKKA homodimer phosphorylates NFKB2/p100 associated with RelB, inducing its proteolytic processing to NFKB2/p52 and the formation of NF-kappa-B RelB-p52 complexes. The NF-kappa-B heterodimeric RelB-p52 complex is a transcriptional activator. The NF-kappa-B p52-p52 homodimer is a transcriptional repressor. NFKB2 appears to have dual functions such as cytoplasmic retention of attached NF-kappa-B proteins by p100 and generation of p52 by a cotranslational processing. The proteasome-mediated process ensures the production of both p52 and p100 and preserves their independent function. p52 binds to the kappa-B consensus sequence 5'-GGRNNYYCC-3', located in the enhancer region of genes involved in immune response and acute phase reactions. p52 and p100 are respectively the minor and major form; the processing of p100 being relatively poor. Isoform p49 is a subunit of the NF-kappa-B protein complex, which stimulates the HIV enhancer in synergy with p65. In concert with RELB, regulates the circadian clock by repressing the transcriptional activator activity of the CLOCK-BMAL1 heterodimer. The sequence is that of Nuclear factor NF-kappa-B p100 subunit (NFKB2) from Homo sapiens (Human).